Reading from the N-terminus, the 208-residue chain is Ypt/Rab-type GTPase ypt71 (208 aa).

Residues 17-23 (SGVGKTC), 33-40 (FSREYKAT), glycine 66, 124-127 (NQID), and 158-160 (SAK) contribute to the GTP site. The short motif at 37–45 (YKATIGADF) is the Effector region element. Residues cysteine 206 and cysteine 208 are each lipidated (S-geranylgeranyl cysteine). A Cysteine methyl ester modification is found at cysteine 208.

It belongs to the small GTPase superfamily. Rab family.

The protein resides in the vacuole membrane. Its activity is regulated as follows. Rab activation is generally mediated by a guanine exchange factor (GEF), while inactivation through hydrolysis of bound GTP is catalyzed by a GTPase activating protein (GAP). Functionally, ypt/Rab-type GTPases are key regulators of membrane trafficking and intracellular vesicular transport. They act as molecular switches that convert between GTP-bound and GDP-bound states, and regulate virtually all steps of membrane traffic from the formation of the transport vesicle at the donor membrane to its fusion at the target membrane. In the GDP-bound state, Ypt proteins are predominantly cytosolic, solubilized through the interaction with a GDP dissociation inhibitor (GDI). In the GTP-bound state, the proteins are membrane bound and interact with specific effector proteins that select cargo, promote vesicle movement, or verify the correct site of fusion. Act antagonistically to ypt7 in regulating vacuolar morphology, promoting vacuolar fission. The protein is Ypt/Rab-type GTPase ypt71 (ypt71) of Schizosaccharomyces pombe (strain 972 / ATCC 24843) (Fission yeast).